A 999-amino-acid polypeptide reads, in one-letter code: MAATVRRQRPRRLLCWALVAVLLADLLALSDTLAVMSVDLGSESMKVAIVKPGVPMEIVLNKESRRKTPVTVTLKENERFLGDSAAGMAIKNPKATLRYFQHLLGKQADNPHVALYRSRFPEHELIVDPQRQTVRFQISPQLQFSPEEVLGMVLNYSRSLAEDFAEQPIKDAVITVPAFFNQAERRAVLQAARMAGLKVLQLINDNTATALSYGVFRRKDINSTAQNVMFYDMGSGSTVCTIVTYQTVKTKEAGMQPQLQIRGVGFDRTLGGLEMELRLREHLAKLFNEQRKGQKAKDVRENPRAMAKLLREANRLKTVLSANADHMAQIEGLMDDVDFKAKVTRVEFEELCADLFDRVPGPVQQALQSAEMSLDQIEQVILVGGATRVPKVQEVLLKAVGKEELGKNINADEAAAMGAVYQAAALSKAFKVKPFVVRDAVIYPILVEFTREVEEEPGLRSLKHNKRVLFSRMGPYPQRKVITFNRYSHDFNFHINYGDLGFLGPEDLRVFGSQNLTTVKLKGVGESFKKYPDYESKGIKAHFNLDESGVLSLDRVESVFETLVEDSPEEESTLTKLGNTISSLFGGGTSSDAKENGTDAVQEEEESPAEGSKDEPAEQGELKEEAEPPAEETSQPPPSEPKGDAAREGEKPDEKESGDKPEAQKPNEKGQAGPEGAAPAPEEDKKPKPARKQKMVEEIGVELAVLDLPDLPEDELARSVQKLEELTLRDLEKQEREKAANSLEAFIFETQDKLYQPEYQEVSTEEQREEISGKLSATSTWLEDEGFGATTVMLKDKLAELRKLCQGLFFRVEERRKWPERLSALDNLLNHSSIFLKGARLIPEMDQVFTEVEMTTLEKVINDTWAWKNATLAEQAKLPATEKPVLLSKDIEAKMMALDREVQYLLNKAKFTKPRPRPKDKNGTRAEPPLNASAGDQEEKVIPPAGQTEEAKPILEPDKEETGTEPADSEPLELGGPGAGPEQEEQSAGQKRPSKNDEL.

The signal sequence occupies residues 1 to 32; it reads MAATVRRQRPRRLLCWALVAVLLADLLALSDT. 3 N-linked (GlcNAc...) asparagine glycosylation sites follow: N155, N222, and N515. Residue S567 is modified to Phosphoserine. The tract at residues 567 to 694 is disordered; that stretch reads SPEEESTLTK…KKPKPARKQK (128 aa). Positions 574 to 583 are enriched in polar residues; the sequence is LTKLGNTISS. A glycan (N-linked (GlcNAc...) asparagine) is linked at N596. 2 stretches are compositionally biased toward basic and acidic residues: residues 611 to 626 and 641 to 668; these read GSKDEPAEQGELKEEA and PKGDAAREGEKPDEKESGDKPEAQKPNE. Positions 669 to 680 are enriched in low complexity; the sequence is KGQAGPEGAAPA. N-linked (GlcNAc...) asparagine glycosylation is found at N830, N862, and N869. At K883 the chain carries N6-acetyllysine. The tract at residues 909–999 is disordered; that stretch reads AKFTKPRPRP…QKRPSKNDEL (91 aa). N-linked (GlcNAc...) asparagine glycans are attached at residues N922 and N931. A compositionally biased stretch (basic and acidic residues) spans 949–962; it reads EEAKPILEPDKEET. The Prevents secretion from ER signature appears at 996–999; that stretch reads NDEL.

It belongs to the heat shock protein 70 family. As to quaternary structure, part of a large chaperone multiprotein complex comprising DNAJB11, HSP90B1, HSPA5, HYOU, PDIA2, PDIA4, PDIA6, PPIB, SDF2L1, UGGT1 and very small amounts of ERP29, but not, or at very low levels, CALR nor CANX.

It localises to the endoplasmic reticulum lumen. Functionally, has a pivotal role in cytoprotective cellular mechanisms triggered by oxygen deprivation. Promotes HSPA5/BiP-mediated ATP nucleotide exchange and thereby activates the unfolded protein response (UPR) pathway in the presence of endoplasmic reticulum stress. May play a role as a molecular chaperone and participate in protein folding. The sequence is that of Hypoxia up-regulated protein 1 (Hyou1) from Mus musculus (Mouse).